Reading from the N-terminus, the 287-residue chain is 4,4'-diapophytoene synthase (287 aa).

(2E,6E)-farnesyl diphosphate is bound by residues 18-21 (HSKS), Tyr-41, and Arg-45. Residues Asp-48 and Asp-52 each coordinate Mg(2+). Gln-165 is a (2E,6E)-farnesyl diphosphate binding site. Residue Asn-168 participates in Mg(2+) binding. Residue Arg-171 coordinates (2E,6E)-farnesyl diphosphate. Asp-172 is a Mg(2+) binding site. Tyr-248 serves as a coordination point for (2E,6E)-farnesyl diphosphate.

It belongs to the phytoene/squalene synthase family. CrtM subfamily. Mg(2+) is required as a cofactor.

It carries out the reaction 2 (2E,6E)-farnesyl diphosphate = 15-cis-4,4'-diapophytoene + 2 diphosphate. It participates in carotenoid biosynthesis; staphyloxanthin biosynthesis; staphyloxanthin from farnesyl diphosphate: step 1/5. Functionally, involved in the biosynthesis of the yellow-orange carotenoid staphyloxanthin, which plays a role in the virulence via its protective function against oxidative stress. Catalyzes the head-to-head condensation of two molecules of farnesyl diphosphate (FPP) into the colorless C(30) carotenoid 4,4'-diapophytoene (dehydrosqualene). The protein is 4,4'-diapophytoene synthase of Staphylococcus aureus.